The primary structure comprises 170 residues: Brassinosteroid-responsive RING protein 1 (170 aa).

A helical transmembrane segment spans residues L15 to L37. An RING-type; atypical zinc finger spans residues C94–R137.

This sequence belongs to the RING-type zinc finger family. As to expression, highly expressed in stems, rosette leaves and siliques, and moderately expressed in roots, cauline leaves and flower. Detected at low levels in seeds.

It localises to the membrane. In terms of biological role, may be involved in the brassinosteroids (BRs) signaling pathway and regulate the growth and development of rosette leaves. Seems to prevent over development of leaves and inflorescence stems. In Arabidopsis thaliana (Mouse-ear cress), this protein is Brassinosteroid-responsive RING protein 1.